We begin with the raw amino-acid sequence, 583 residues long: Bifunctional dihydrofolate reductase-thymidylate synthase (583 aa).

The DHFR domain occupies 9–229; that stretch reads DIYAICACCK…TTLDFVIYSK (221 aa). 36 to 42 provides a ligand contact to NADP(+); it reads GLGNEGG. Residue Asp-51 coordinates substrate. Residues 104–106 and 125–128 contribute to the NADP(+) site; these read KAS and LSRT. 3 residues coordinate substrate: Ile-165, Tyr-171, and Thr-186. An NADP(+)-binding site is contributed by 166-173; that stretch reads GGASVYKE. Residues 298–583 are thymidylate synthase; the sequence is HPEYQYLNII…HDKISMDMAA (286 aa). Arg-320 lines the dUMP pocket. The active site involves Cys-465. DUMP contacts are provided by residues His-466, 484 to 488, Asn-496, and 526 to 528; these read QRSCD and HVY.

In the N-terminal section; belongs to the dihydrofolate reductase family. It in the C-terminal section; belongs to the thymidylate synthase family. Homodimer.

It catalyses the reaction (6S)-5,6,7,8-tetrahydrofolate + NADP(+) = 7,8-dihydrofolate + NADPH + H(+). It carries out the reaction dUMP + (6R)-5,10-methylene-5,6,7,8-tetrahydrofolate = 7,8-dihydrofolate + dTMP. It participates in cofactor biosynthesis; tetrahydrofolate biosynthesis; 5,6,7,8-tetrahydrofolate from 7,8-dihydrofolate: step 1/1. Bifunctional enzyme. Involved in de novo dTMP biosynthesis. Key enzyme in folate metabolism. Catalyzes an essential reaction for de novo glycine and purine synthesis, DNA precursor synthesis, and for the conversion of dUMP to dTMP. This chain is Bifunctional dihydrofolate reductase-thymidylate synthase, found in Plasmodium chabaudi.